The chain runs to 517 residues: B3 domain-containing protein REM1 (517 aa).

Positions 7–92 (FSLFQQKFRT…VFHVAVVSPS (86 aa)) form a DNA-binding region, TF-B3 1. Over residues 115–140 (DDVDDDDYGQDDEDDDDDDDEGEDNI) the composition is skewed to acidic residues. A disordered region spans residues 115–158 (DDVDDDDYGQDDEDDDDDDDEGEDNIENISEKTDKRQEADSSSD). The span at 143–157 (ISEKTDKRQEADSSS) shows a compositional bias: basic and acidic residues. 2 consecutive DNA-binding regions (TF-B3) follow at residues 162–259 (FITA…CPQE) and 285–385 (FLIV…FCSK). Residues 393–415 (GKGNQRTRKKRACETAPQPRNVK) form a disordered region.

As to expression, expressed in the shoot apical meristem (SAM), in the inflorescence apex and flowers.

Its subcellular location is the nucleus. Its function is as follows. May play a role in flower development. In Arabidopsis thaliana (Mouse-ear cress), this protein is B3 domain-containing protein REM1 (REM1).